A 101-amino-acid chain; its full sequence is Small ribosomal subunit protein uS14 (101 aa).

Belongs to the universal ribosomal protein uS14 family. In terms of assembly, part of the 30S ribosomal subunit. Contacts proteins S3 and S10.

In terms of biological role, binds 16S rRNA, required for the assembly of 30S particles and may also be responsible for determining the conformation of the 16S rRNA at the A site. In Aliivibrio salmonicida (strain LFI1238) (Vibrio salmonicida (strain LFI1238)), this protein is Small ribosomal subunit protein uS14.